Consider the following 180-residue polypeptide: Inosine/xanthosine triphosphatase (180 aa).

Residue 8–13 (TTNPAK) coordinates substrate. Asp38 is a binding site for Mg(2+).

Belongs to the YjjX NTPase family. As to quaternary structure, homodimer. The cofactor is Mg(2+). It depends on Mn(2+) as a cofactor.

It carries out the reaction XTP + H2O = XDP + phosphate + H(+). The enzyme catalyses ITP + H2O = IDP + phosphate + H(+). Its function is as follows. Phosphatase that hydrolyzes non-canonical purine nucleotides such as XTP and ITP to their respective diphosphate derivatives. Probably excludes non-canonical purines from DNA/RNA precursor pool, thus preventing their incorporation into DNA/RNA and avoiding chromosomal lesions. The chain is Inosine/xanthosine triphosphatase from Yersinia pseudotuberculosis serotype O:1b (strain IP 31758).